Here is a 464-residue protein sequence, read N- to C-terminus: Argininosuccinate lyase (464 aa).

It belongs to the lyase 1 family. Argininosuccinate lyase subfamily.

The protein resides in the cytoplasm. The enzyme catalyses 2-(N(omega)-L-arginino)succinate = fumarate + L-arginine. It functions in the pathway amino-acid biosynthesis; L-arginine biosynthesis; L-arginine from L-ornithine and carbamoyl phosphate: step 3/3. The protein is Argininosuccinate lyase of Moorella thermoacetica (strain ATCC 39073 / JCM 9320).